Consider the following 450-residue polypeptide: MSKISKIKAREVLDSRGNPTIQVEVWTEAGGHGSAIVPSGASTGTREALELRDGGTVYESNWFGGKGVQTAVDNVNNKIAVLLKGHCVLNQRKLDNMMLQLDKTENKSALGANAILGVSLAIAKAAADELKIPLYRYLGGTNAHQLPVPMLNVINGGEHASNTLDFQEFMIMPLGAKTFKQALQVANKIFHTLAKLLKKAGHGTQVGDEGGFAPNLKSHEEALDFLVKAIEEAGFRPATEGENAVAIAIDAAASELYHDGIYTFKKLKKAIEEKRQGFEPTRVQFTTEEMIQYFGHLFHTYPIISVEDGLAESDWKGFVRFTQKFGKTHQIVGDDLTVTNAKILAEAIEKKAINSILIKLNQIGTVSETLDTIELAHKAGYTTVISHRSGESEDTTIADLAVAVNAGQIKTGSLSRTDRIAKYNRLLAIEEAIQSTAQYKGEKVFFNIKK.

Gln167 serves as a coordination point for (2R)-2-phosphoglycerate. Glu209 (proton donor) is an active-site residue. Asp250, Glu307, and Asp334 together coordinate Mg(2+). Residues Lys359, Arg388, Ser389, and Lys410 each contribute to the (2R)-2-phosphoglycerate site. Lys359 serves as the catalytic Proton acceptor.

This sequence belongs to the enolase family. Requires Mg(2+) as cofactor.

It is found in the cytoplasm. The protein localises to the secreted. It localises to the cell surface. It carries out the reaction (2R)-2-phosphoglycerate = phosphoenolpyruvate + H2O. The protein operates within carbohydrate degradation; glycolysis; pyruvate from D-glyceraldehyde 3-phosphate: step 4/5. Catalyzes the reversible conversion of 2-phosphoglycerate (2-PG) into phosphoenolpyruvate (PEP). It is essential for the degradation of carbohydrates via glycolysis. Its function is as follows. 'Moonlights' as a plasminogen receptor and plasmin activator. Contributes to host (pig) cell adhesion; anti-enolase antibodies decrease binding to porcine kidney cells about 60%. Binds host plasminogen and fibronectin in vitro; enhances the activity of host tissue-specific plasminogen activator (tPA), and helps plasminogen and tPA degrade articifial host extracellular matrices. The sequence is that of Enolase from Mesomycoplasma hyorhinis (strain HUB-1) (Mycoplasma hyorhinis).